The chain runs to 286 residues: Release factor glutamine methyltransferase (286 aa).

Residues 122–126, Asp145, Trp173, and Asn188 each bind S-adenosyl-L-methionine; that span reads GTGTG. 188-191 is a binding site for substrate; the sequence is NPPY.

The protein belongs to the protein N5-glutamine methyltransferase family. PrmC subfamily.

The enzyme catalyses L-glutaminyl-[peptide chain release factor] + S-adenosyl-L-methionine = N(5)-methyl-L-glutaminyl-[peptide chain release factor] + S-adenosyl-L-homocysteine + H(+). Methylates the class 1 translation termination release factors RF1/PrfA and RF2/PrfB on the glutamine residue of the universally conserved GGQ motif. This Shewanella oneidensis (strain ATCC 700550 / JCM 31522 / CIP 106686 / LMG 19005 / NCIMB 14063 / MR-1) protein is Release factor glutamine methyltransferase.